Consider the following 287-residue polypeptide: Acetyl-coenzyme A carboxylase carboxyl transferase subunit beta (287 aa).

The CoA carboxyltransferase N-terminal domain occupies 25–287; that stretch reads VWTKCSACEQ…KMLNTHVIEE (263 aa). Zn(2+)-binding residues include C29, C32, C48, and C51. The segment at 29-51 adopts a C4-type zinc-finger fold; sequence CSACEQVLYRAELERNLEVCPKC.

Belongs to the AccD/PCCB family. As to quaternary structure, acetyl-CoA carboxylase is a heterohexamer composed of biotin carboxyl carrier protein (AccB), biotin carboxylase (AccC) and two subunits each of ACCase subunit alpha (AccA) and ACCase subunit beta (AccD). Zn(2+) serves as cofactor.

It localises to the cytoplasm. It catalyses the reaction N(6)-carboxybiotinyl-L-lysyl-[protein] + acetyl-CoA = N(6)-biotinyl-L-lysyl-[protein] + malonyl-CoA. The protein operates within lipid metabolism; malonyl-CoA biosynthesis; malonyl-CoA from acetyl-CoA: step 1/1. Its function is as follows. Component of the acetyl coenzyme A carboxylase (ACC) complex. Biotin carboxylase (BC) catalyzes the carboxylation of biotin on its carrier protein (BCCP) and then the CO(2) group is transferred by the transcarboxylase to acetyl-CoA to form malonyl-CoA. The protein is Acetyl-coenzyme A carboxylase carboxyl transferase subunit beta of Aeromonas salmonicida (strain A449).